Consider the following 79-residue polypeptide: MAVKLRLTRMGNKKRAFYRIIAINSEARREGRPLDYIGYYNPMVDPAEVKIDTEKVQKWLERGAEPTDTVRALLKKNAQ.

This sequence belongs to the bacterial ribosomal protein bS16 family.

This Oleidesulfovibrio alaskensis (strain ATCC BAA-1058 / DSM 17464 / G20) (Desulfovibrio alaskensis) protein is Small ribosomal subunit protein bS16.